The chain runs to 273 residues: Ribosomal RNA small subunit methyltransferase A (273 aa).

Residues Asn-18, Leu-20, Gly-45, Glu-66, Asp-91, and Asn-113 each coordinate S-adenosyl-L-methionine.

The protein belongs to the class I-like SAM-binding methyltransferase superfamily. rRNA adenine N(6)-methyltransferase family. RsmA subfamily.

Its subcellular location is the cytoplasm. It catalyses the reaction adenosine(1518)/adenosine(1519) in 16S rRNA + 4 S-adenosyl-L-methionine = N(6)-dimethyladenosine(1518)/N(6)-dimethyladenosine(1519) in 16S rRNA + 4 S-adenosyl-L-homocysteine + 4 H(+). Specifically dimethylates two adjacent adenosines (A1518 and A1519) in the loop of a conserved hairpin near the 3'-end of 16S rRNA in the 30S particle. May play a critical role in biogenesis of 30S subunits. This chain is Ribosomal RNA small subunit methyltransferase A, found in Salmonella agona (strain SL483).